The following is a 399-amino-acid chain: Subtilisin-like protease CPC735_033790 (399 aa).

Positions 1–20 (MGFLSSAILLLITAFPAAQA) are cleaved as a signal peptide. Positions 21-117 (GEMINAAAGA…VEPDRMVNIT (97 aa)) are excised as a propeptide. Residues 37–116 (SYIVVMNEGI…YVEPDRMVNI (80 aa)) enclose the Inhibitor I9 domain. N115 carries N-linked (GlcNAc...) asparagine glycosylation. One can recognise a Peptidase S8 domain in the interval 127–399 (SYGLGRISNK…NRLLYNNSGV (273 aa)). Residues D159 and H190 each act as charge relay system in the active site. A glycan (N-linked (GlcNAc...) asparagine) is linked at N251. S345 serves as the catalytic Charge relay system. A glycan (N-linked (GlcNAc...) asparagine) is linked at N395.

Belongs to the peptidase S8 family.

It is found in the secreted. Secreted subtilisin-like serine protease with keratinolytic activity that contributes to pathogenicity. The polypeptide is Subtilisin-like protease CPC735_033790 (Coccidioides posadasii (strain C735) (Valley fever fungus)).